The primary structure comprises 86 residues: Large ribosomal subunit protein bL27 (86 aa).

Residues 1-22 (MATKKAGGSSRNGRDSAGRRLG) form a disordered region.

The protein belongs to the bacterial ribosomal protein bL27 family.

The sequence is that of Large ribosomal subunit protein bL27 from Rickettsia bellii (strain RML369-C).